The primary structure comprises 417 residues: Gamma-glutamyl phosphate reductase (417 aa).

It belongs to the gamma-glutamyl phosphate reductase family.

It localises to the cytoplasm. The enzyme catalyses L-glutamate 5-semialdehyde + phosphate + NADP(+) = L-glutamyl 5-phosphate + NADPH + H(+). It functions in the pathway amino-acid biosynthesis; L-proline biosynthesis; L-glutamate 5-semialdehyde from L-glutamate: step 2/2. Catalyzes the NADPH-dependent reduction of L-glutamate 5-phosphate into L-glutamate 5-semialdehyde and phosphate. The product spontaneously undergoes cyclization to form 1-pyrroline-5-carboxylate. The polypeptide is Gamma-glutamyl phosphate reductase (Legionella pneumophila (strain Paris)).